The primary structure comprises 486 residues: Argininosuccinate lyase (486 aa).

This sequence belongs to the lyase 1 family. Argininosuccinate lyase subfamily.

It localises to the cytoplasm. The enzyme catalyses 2-(N(omega)-L-arginino)succinate = fumarate + L-arginine. The protein operates within amino-acid biosynthesis; L-arginine biosynthesis; L-arginine from L-ornithine and carbamoyl phosphate: step 3/3. The polypeptide is Argininosuccinate lyase (Acidovorax ebreus (strain TPSY) (Diaphorobacter sp. (strain TPSY))).